Consider the following 562-residue polypeptide: Potassium-transporting ATPase potassium-binding subunit (562 aa).

The next 12 helical transmembrane spans lie at 6–26 (FLLIASFMLVLFVLSRPLGGF), 62–82 (YALAILCFNLLGIVLLFVLLM), 132–152 (GLTVQNFLSAATGIAVAFALI), 175–195 (LYVLLPIALIIALIFVSQGVL), 253–273 (FVQMLAIFLIPCALCFAFGQV), 283–303 (LIWAMSLIFIVAVVVVMYAEL), 327–347 (FGILATSLYAVVTTAASCGAV), 356–376 (ALGGMIPLWLMQIGEVVFGGV), 379–399 (GLYGMLLFVLLTVFIAGLMIG), 416–436 (MTALAILVTPTIVLLGTALAL), 483–503 (LLLAAAMFIGRFGVILPVLAI), and 524–544 (GLLFIGLLIGTVLLVGALTFI).

It belongs to the KdpA family. The system is composed of three essential subunits: KdpA, KdpB and KdpC.

The protein resides in the cell inner membrane. Functionally, part of the high-affinity ATP-driven potassium transport (or Kdp) system, which catalyzes the hydrolysis of ATP coupled with the electrogenic transport of potassium into the cytoplasm. This subunit binds the periplasmic potassium ions and delivers the ions to the membrane domain of KdpB through an intramembrane tunnel. The protein is Potassium-transporting ATPase potassium-binding subunit of Yersinia pestis bv. Antiqua (strain Antiqua).